A 221-amino-acid polypeptide reads, in one-letter code: uncharacterized protein (221 aa).

The next 4 helical transmembrane spans lie at 30–50, 62–82, 144–164, and 179–199; these read FGIFLALSIEFIPAEVVLPLA, AGVVLAGSLGGVAGPLTLYWI, VWVFSLYTFIAMLPITFVYVY, and ILDQYMLPIGIAILALFLLYL.

It belongs to the DedA family.

Its subcellular location is the cell membrane. This is an uncharacterized protein from Bacillus subtilis (strain 168).